Reading from the N-terminus, the 330-residue chain is Inactive serine protease 45 (330 aa).

The signal sequence occupies residues 1-35 (MATSLRLLDAGPGSLRRWIPTCFAALLLLPPRPNL). Residues 45-291 (VCGAPWWSDS…YTGWIKEQVS (247 aa)) enclose the Peptidase S1 domain. Disulfide bonds link Cys-75–Cys-91, Cys-172–Cys-249, Cys-207–Cys-230, and Cys-239–Cys-267. Asn-272 is a glycosylation site (N-linked (GlcNAc...) asparagine).

The protein belongs to the peptidase S1 family.

It localises to the secreted. This Rattus norvegicus (Rat) protein is Inactive serine protease 45 (Prss45).